A 234-amino-acid polypeptide reads, in one-letter code: 7-cyano-7-deazaguanine synthase (234 aa).

15–25 is an ATP binding site; the sequence is LSGGLDSSTCL. Residues cysteine 199, cysteine 208, cysteine 211, and cysteine 214 each coordinate Zn(2+).

Belongs to the QueC family. It depends on Zn(2+) as a cofactor.

It catalyses the reaction 7-carboxy-7-deazaguanine + NH4(+) + ATP = 7-cyano-7-deazaguanine + ADP + phosphate + H2O + H(+). Its pathway is purine metabolism; 7-cyano-7-deazaguanine biosynthesis. Catalyzes the ATP-dependent conversion of 7-carboxy-7-deazaguanine (CDG) to 7-cyano-7-deazaguanine (preQ(0)). The sequence is that of 7-cyano-7-deazaguanine synthase from Anaeromyxobacter dehalogenans (strain 2CP-C).